Consider the following 244-residue polypeptide: Transcriptional regulatory protein AruR (244 aa).

Residues 6–124 form the Response regulatory domain; the sequence is RVLVVDDDPV…ELVSRAKNLI (119 aa). At aspartate 60 the chain carries 4-aspartylphosphate. Residues 139–239 constitute a DNA-binding region (ompR/PhoB-type); sequence QALRQFGDWL…IHGAGYLFTA (101 aa).

In terms of processing, phosphorylated by AruS.

The protein resides in the cytoplasm. The protein operates within amino-acid degradation; L-arginine degradation [regulation]. Its function is as follows. Member of the two-component regulatory system AruS/AruR, which is involved in the regulation of the arginine transaminase (ATA) pathway in response to exogeneous L-arginine. Regulates transcription of aruH and aruI. This is Transcriptional regulatory protein AruR (aruR) from Pseudomonas aeruginosa (strain ATCC 15692 / DSM 22644 / CIP 104116 / JCM 14847 / LMG 12228 / 1C / PRS 101 / PAO1).